The following is a 366-amino-acid chain: Zinc-regulated GTPase metalloprotein activator 1 (366 aa).

A psi-PxLVp motif motif is present at residues 5–12; it reads DECPELVP. GTP is bound at residue 31–38; the sequence is GYLGAGKT. C89, C91, and C92 together coordinate Zn(2+). The CXCC motif motif lies at 89-92; sequence CLCC. GTP is bound by residues 92-96 and 185-188; these read CSVKD and NKTD. A CobW C-terminal domain is found at 258 to 357; it reads TITFEVPGSV…GEILKKEFIS (100 aa).

It belongs to the SIMIBI class G3E GTPase family. ZNG1 subfamily.

The protein resides in the nucleus. The enzyme catalyses GTP + H2O = GDP + phosphate + H(+). Zinc chaperone that directly transfers zinc cofactor to target metalloproteins, thereby activating them. Catalyzes zinc insertion into the active site of methionine aminopeptidase METAP1, which function to cleave the initiator methionine from polypeptides during or after protein translation. Mechanistically, the N-terminal psi-PxLVp motif binds to the C6H2-type zinc finger of inactive form of METAP1. After formation of the docked complex, zinc is transferred from the CXCC motif in the GTPase domain of ZNG1 to the zinc binding site in the peptidase domain of METAP1 in a process requiring GTP hydrolysis. GTP/GDP exchange is required for release of active METAP1. In Danio rerio (Zebrafish), this protein is Zinc-regulated GTPase metalloprotein activator 1.